The sequence spans 487 residues: MATETVLATAVSNGKSKGCCKSGPGYATPLAAMAGPREKLIYVTALYSGTGRDKPDYLATVDVDPSSPTFSSVIHRLKMPYIGDELHHTGWNSCSSCHGDASADRRYLVLPGLISGRIYAIDTKTDPKAPSLYKVVEPKEIAEKTGLAFPHTSHCLASGDMLVSCLGDKEGNAKGNGFLLLDSDFNVKSRWDKPGHGPLFGYDFWYQPRFKTMISTSWGAPKAFSKGFNLQHVADGLYGSHLHIYQWPEGEMKQIIDLGNTGLLPLEIRFLHDPSKDTGYVGSALSSNMIRFFKNSDDTWSHEVVISVKPLKVENWILPEMPGLITDFLISLDDRFFYFVNWLHGDIRQYNIEDPKNPVLTGQIWVGGLLQKGSPYKAVGEDGNTYQFDVPQIKGKSLRAGPQMIQLSLDGKRLYATNSLFSAWDRQFYPEIMEKGSHIIQIDVDTDKGGLTLNPDFFVDFGDEPDGPALAHEMRYPGGDCTSDIWI.

Ala2 carries the post-translational modification N-acetylalanine. 2 residues coordinate selenite: Cys19 and Cys20.

Belongs to the selenium-binding protein family. As to expression, mostly expressed in seedlings, leaves and stems, and, to a lower extent, in flowers and roots.

In terms of biological role, required for the fusion of female gametophyte polar nuclei. This Arabidopsis thaliana (Mouse-ear cress) protein is Selenium-binding protein 2 (SBP2).